The primary structure comprises 226 residues: uncharacterized protein (226 aa).

Positions 168–226 constitute an HTH cro/C1-type domain; the sequence is ISALRNKLGLTQTDLGKRINVDANVIRNIETGDLVAFNVQDPMVRSLAYALGIRTIKYQ. A DNA-binding region (H-T-H motif) is located at residues 179 to 198; that stretch reads QTDLGKRINVDANVIRNIET.

This is an uncharacterized protein from Acanthamoeba polyphaga mimivirus (APMV).